A 317-amino-acid polypeptide reads, in one-letter code: CXXC-type zinc finger protein 5 (317 aa).

The segment covering 1–10 (MSSLGGGSQD) has biased composition (gly residues). The disordered stretch occupies residues 1–92 (MSSLGGGSQD…SFGSSGGGGS (92 aa)). 2 stretches are compositionally biased toward low complexity: residues 11 to 27 (AGGS…SGSG) and 36 to 51 (STAV…VADD). A CXXC-type zinc finger spans residues 251–292 (GKKKRKRCGMCAPCRRRINCEQCSSCRNRKTGHQICKFRKCE). Residues 252–257 (KKKRKR) carry the Nuclear localization signal motif. Zn(2+) contacts are provided by C258, C261, C264, C270, C273, C276, C286, and C291.

As to quaternary structure, interacts with DVL1. Interacts with RBPJ.

It is found in the nucleus. It localises to the cytoplasm. In terms of biological role, may indirectly participate in activation of the NF-kappa-B and MAPK pathways. Acts as a mediator of BMP4-mediated modulation of canonical Wnt signaling activity in neural stem cells. Required for DNA damage-induced ATM phosphorylation, p53 activation and cell cycle arrest. Involved in myelopoiesis. Binds to the oxygen responsive element of COX4I2 and represses its transcription under hypoxia conditions (4% oxygen), as well as normoxia conditions (20% oxygen). May repress COX4I2 transactivation induced by CHCHD2 and RBPJ. Binds preferentially to DNA containing cytidine-phosphate-guanosine (CpG) dinucleotides over CpH (H=A, T, and C), hemimethylated-CpG and hemimethylated-hydroxymethyl-CpG. The chain is CXXC-type zinc finger protein 5 (Cxxc5) from Mus musculus (Mouse).